A 188-amino-acid chain; its full sequence is Elongation factor P (188 aa).

At Lys-34 the chain carries N6-(3,6-diaminohexanoyl)-5-hydroxylysine.

It belongs to the elongation factor P family. May be beta-lysylated on the epsilon-amino group of Lys-34 by the combined action of EpmA and EpmB, and then hydroxylated on the C5 position of the same residue by EpmC (if this protein is present). Lysylation is critical for the stimulatory effect of EF-P on peptide-bond formation. The lysylation moiety may extend toward the peptidyltransferase center and stabilize the terminal 3-CCA end of the tRNA. Hydroxylation of the C5 position on Lys-34 may allow additional potential stabilizing hydrogen-bond interactions with the P-tRNA.

The protein resides in the cytoplasm. It participates in protein biosynthesis; polypeptide chain elongation. Involved in peptide bond synthesis. Alleviates ribosome stalling that occurs when 3 or more consecutive Pro residues or the sequence PPG is present in a protein, possibly by augmenting the peptidyl transferase activity of the ribosome. Modification of Lys-34 is required for alleviation. The sequence is that of Elongation factor P from Xylella fastidiosa (strain M23).